A 122-amino-acid polypeptide reads, in one-letter code: MIQPQTHLNVADNSGARELMCIRIIGASNRRYAHIGDVIVAVIKEAVPNMPLERSEVIRAVIVRTCKELKRDNGMIIRYDDNAAVVIDQEGNPKGTRVFGAIARELRKLNFTKIVSLAPEVL.

Belongs to the universal ribosomal protein uL14 family. In terms of assembly, part of the 50S ribosomal subunit.

It is found in the plastid. Its subcellular location is the chloroplast. In terms of biological role, binds to 23S rRNA. This Calycanthus floridus var. glaucus (Eastern sweetshrub) protein is Large ribosomal subunit protein uL14c.